We begin with the raw amino-acid sequence, 482 residues long: UDP-N-acetylmuramate--L-alanine ligase (482 aa).

123–129 (GTHGKTT) is an ATP binding site.

The protein belongs to the MurCDEF family.

The protein localises to the cytoplasm. It carries out the reaction UDP-N-acetyl-alpha-D-muramate + L-alanine + ATP = UDP-N-acetyl-alpha-D-muramoyl-L-alanine + ADP + phosphate + H(+). The protein operates within cell wall biogenesis; peptidoglycan biosynthesis. In terms of biological role, cell wall formation. In Pseudomonas entomophila (strain L48), this protein is UDP-N-acetylmuramate--L-alanine ligase.